The following is a 176-amino-acid chain: Cytochrome b (176 aa).

The next 3 helical transmembrane spans lie at 33-53 (FGSL…FLAM), 77-98 (WMLR…YLHV), and 113-133 (WNVG…GYVL). Residues His-83 and His-97 each contribute to the heme b site.

This sequence belongs to the cytochrome b family. As to quaternary structure, the cytochrome bc1 complex contains 11 subunits: 3 respiratory subunits (MT-CYB, CYC1 and UQCRFS1), 2 core proteins (UQCRC1 and UQCRC2) and 6 low-molecular weight proteins (UQCRH/QCR6, UQCRB/QCR7, UQCRQ/QCR8, UQCR10/QCR9, UQCR11/QCR10 and a cleavage product of UQCRFS1). This cytochrome bc1 complex then forms a dimer. Heme b serves as cofactor.

The protein resides in the mitochondrion inner membrane. Component of the ubiquinol-cytochrome c reductase complex (complex III or cytochrome b-c1 complex) that is part of the mitochondrial respiratory chain. The b-c1 complex mediates electron transfer from ubiquinol to cytochrome c. Contributes to the generation of a proton gradient across the mitochondrial membrane that is then used for ATP synthesis. This Idionycteris phyllotis (Allen's big-eared bat) protein is Cytochrome b (MT-CYB).